Here is a 108-residue protein sequence, read N- to C-terminus: C-C motif chemokine 19 (108 aa).

Positions 1 to 25 are cleaved as a signal peptide; sequence MAPRVTPLLAFSLLVLWTFPAPTLG. 2 disulfide bridges follow: cysteine 33/cysteine 59 and cysteine 34/cysteine 75. Asparagine 100 carries an N-linked (GlcNAc...) asparagine glycan.

Belongs to the intercrine beta (chemokine CC) family. As to quaternary structure, interacts with TNFAIP6 (via Link domain). As to expression, highly expressed by dendritic cells in mesenteric and peripheral lymph nodes. Significant expression in spleen (T cell zone or periarteriolar lymphatic sheath) and Peyer patches. Low expression in thymus.

It localises to the secreted. Its function is as follows. Strongly chemotactic for naive (L-selectinhi) CD4 T-cells and for CD8 T-cells and weakly attractive for resting B-cells and memory (L-selectinlo) CD4 T-cells. May play a role in promoting encounters between recirculating T-cells and dendritic cells and in the migration of activated B-cells into the T-zone of secondary lymphoid tissues. Binds to chemokine receptor CCR7. Binds to atypical chemokine receptor ACKR4 and mediates the recruitment of beta-arrestin (ARRB1/2) to ACKR4. The protein is C-C motif chemokine 19 (Ccl19) of Mus musculus (Mouse).